Consider the following 360-residue polypeptide: Codeine O-demethylase (360 aa).

One can recognise a Fe2OG dioxygenase domain in the interval 211 to 311 (GLQTMRMNYY…RLSIATFHDS (101 aa)). Tyr220 lines the 2-oxoglutarate pocket. Residues His235, Asp237, and His292 each coordinate Fe cation. 2-oxoglutarate-binding residues include Arg302 and Ser304.

Belongs to the iron/ascorbate-dependent oxidoreductase family. The cofactor is L-ascorbate. Fe cation serves as cofactor. Mainly expressed in stems, capsules and leaves and, to a lower extent, in roots.

It catalyses the reaction codeine + 2-oxoglutarate + O2 = morphine + formaldehyde + succinate + CO2. It carries out the reaction thebaine + 2-oxoglutarate + O2 = oripavine + formaldehyde + succinate + CO2. The enzyme catalyses (S)-scoulerine + 2-oxoglutarate + O2 = (S)-3-O-demethylscoulerine + formaldehyde + succinate + CO2. The catalysed reaction is thebaine + 2-oxoglutarate + O2 = neopinone + formaldehyde + succinate + CO2. It catalyses the reaction (S)-reticuline + 2-oxoglutarate + O2 = (S)-6-O-demethylreticuline + formaldehyde + succinate + CO2. It carries out the reaction (S)-tetrahydropalmatine + S-adenosyl-L-methionine = (S)-cis-N-methyltetrahydropalmatine + S-adenosyl-L-homocysteine. It participates in alkaloid biosynthesis; morphine biosynthesis. Moderate substrate inhibition. Not inhibited in vitro by acylcyclohexanediones. Functionally, non-heme dioxygenase involved in biosynthesis of morphinan-type benzylisoquinoline and opiate alkaloids natural products. Mediates the conversion of codeine to morphine. Also catalyzes, with lower efficiency, the 3-O-demethylation of thebaine to oripavine and of (S)-scoulerine to 3-O-demethylscoulerine. Supports, with a lower turnover, the conversion of codeinone to morphinone, of thebaine to neopinone, and of neopine to neomorphine. Supports dealkylation reactions such as O,O-demethylenation in the metabolism of protopine, benzo[c]phenanthridine, and rhoeadine alkaloids; cleaves a methylenedioxy bridge leaving two hydroxyl groups. Catalyzes the O,O-demethylenation of methylenedioxy bridges on protopine alkaloids such as allocryptopine, cryptopine and protopine. No activity with (S)-reticuline, salutaridine, papaverine, (S)-corytuberine, oripavine, pavine or noscapine. This Papaver somniferum (Opium poppy) protein is Codeine O-demethylase.